The sequence spans 264 residues: MKIEAVIFDWAGTTVDYGCFAPLEVFMEIFHKRGVGITAEEARKPMGLLKIDHVRALTEMPRIANEWNRIFGQLPTETDIQEMYEEFEEILFAILPRYASPIHGVKEVIASLRERGIKIGSTTGYTREMMDIVAKEAALQGYKPDFLVTPDDVPAGRPYPWMCYKNAMELGVYPMNHMIKIGDTVSDMKEGRNAGMWTVGVILGSSELGLSEEEVENMDPAELREKIEVVRNRFVENGAHFTIETMQELESVMERIEKQELIIS.

Aspartate 9 acts as the Nucleophile in catalysis. 2 residues coordinate Mg(2+): aspartate 9 and alanine 11. The Schiff-base intermediate with substrate role is filled by lysine 50. Aspartate 183 is a Mg(2+) binding site.

It belongs to the HAD-like hydrolase superfamily. PhnX family. In terms of assembly, homodimer. Requires Mg(2+) as cofactor.

It catalyses the reaction phosphonoacetaldehyde + H2O = acetaldehyde + phosphate + H(+). In terms of biological role, involved in phosphonate degradation. The sequence is that of Phosphonoacetaldehyde hydrolase from Bacillus anthracis.